We begin with the raw amino-acid sequence, 451 residues long: Phenylalanine--tRNA ligase, mitochondrial (451 aa).

Residues S157–Q160, R179, Q186–Y188, and Q193–E195 contribute to the substrate site. Position 202 is an N6-acetyllysine (K202). Residues E287 and F312 each contribute to the substrate site. Positions S358 to R450 constitute an FDX-ACB domain.

It belongs to the class-II aminoacyl-tRNA synthetase family. Monomer.

It is found in the mitochondrion matrix. It localises to the mitochondrion. The catalysed reaction is tRNA(Phe) + L-phenylalanine + ATP = L-phenylalanyl-tRNA(Phe) + AMP + diphosphate + H(+). Functionally, is responsible for the charging of tRNA(Phe) with phenylalanine in mitochondrial translation. To a lesser extent, also catalyzes direct attachment of m-Tyr (an oxidized version of Phe) to tRNA(Phe), thereby opening the way for delivery of the misacylated tRNA to the ribosome and incorporation of ROS-damaged amino acid into proteins. The sequence is that of Phenylalanine--tRNA ligase, mitochondrial (Fars2) from Mus musculus (Mouse).